The chain runs to 377 residues: Chaperone protein DnaJ (377 aa).

Residues 4-69 form the J domain; sequence DYYEALGVTR…QKRAAYDRFG (66 aa). The segment at 135–213 adopts a CR-type zinc-finger fold; that stretch reads GKTAQIRVPT…CHGQGRVTQE (79 aa). Residues Cys148, Cys151, Cys165, Cys168, Cys187, Cys190, Cys201, and Cys204 each contribute to the Zn(2+) site. 4 CXXCXGXG motif repeats span residues 148 to 155, 165 to 172, 187 to 194, and 201 to 208; these read CDECSGSG, CTMCSGSG, CPGCNGRG, and CEKCHGQG.

This sequence belongs to the DnaJ family. In terms of assembly, homodimer. The cofactor is Zn(2+).

Its subcellular location is the cytoplasm. Its function is as follows. Participates actively in the response to hyperosmotic and heat shock by preventing the aggregation of stress-denatured proteins and by disaggregating proteins, also in an autonomous, DnaK-independent fashion. Unfolded proteins bind initially to DnaJ; upon interaction with the DnaJ-bound protein, DnaK hydrolyzes its bound ATP, resulting in the formation of a stable complex. GrpE releases ADP from DnaK; ATP binding to DnaK triggers the release of the substrate protein, thus completing the reaction cycle. Several rounds of ATP-dependent interactions between DnaJ, DnaK and GrpE are required for fully efficient folding. Also involved, together with DnaK and GrpE, in the DNA replication of plasmids through activation of initiation proteins. The protein is Chaperone protein DnaJ of Brucella abortus (strain S19).